The following is a 167-amino-acid chain: ATP synthase subunit b (167 aa).

The chain crosses the membrane as a helical span at residues 10–30 (TFFFQLANTLIMFLILKHFLF).

It belongs to the ATPase B chain family. In terms of assembly, F-type ATPases have 2 components, F(1) - the catalytic core - and F(0) - the membrane proton channel. F(1) has five subunits: alpha(3), beta(3), gamma(1), delta(1), epsilon(1). F(0) has three main subunits: a(1), b(2) and c(10-14). The alpha and beta chains form an alternating ring which encloses part of the gamma chain. F(1) is attached to F(0) by a central stalk formed by the gamma and epsilon chains, while a peripheral stalk is formed by the delta and b chains.

It localises to the cell membrane. In terms of biological role, f(1)F(0) ATP synthase produces ATP from ADP in the presence of a proton or sodium gradient. F-type ATPases consist of two structural domains, F(1) containing the extramembraneous catalytic core and F(0) containing the membrane proton channel, linked together by a central stalk and a peripheral stalk. During catalysis, ATP synthesis in the catalytic domain of F(1) is coupled via a rotary mechanism of the central stalk subunits to proton translocation. Component of the F(0) channel, it forms part of the peripheral stalk, linking F(1) to F(0). The protein is ATP synthase subunit b of Alkaliphilus oremlandii (strain OhILAs) (Clostridium oremlandii (strain OhILAs)).